A 602-amino-acid polypeptide reads, in one-letter code: Cholinesterase (602 aa).

Positions 1-28 (MHSKVTIICIRFLFWFLLLCMLIGKSHT) are cleaved as a signal peptide. N-linked (GlcNAc...) (complex) asparagine glycans are attached at residues Asn-45 and Asn-85. Cys-93 and Cys-120 are disulfide-bonded. Trp-110 is a binding site for tacrine. Residue Asn-134 is glycosylated (N-linked (GlcNAc...) (complex) asparagine). 144-145 (GG) serves as a coordination point for substrate. The active-site Acyl-ester intermediate is the Ser-226. At Ser-226 the chain carries Phosphoserine. N-linked (GlcNAc...) (complex) asparagine glycosylation is found at Asn-269 and Asn-284. A disulfide bond links Cys-280 and Cys-291. Glu-353 acts as the Charge relay system in catalysis. N-linked (GlcNAc...) (complex) asparagine glycosylation is present at Asn-369. Residues Cys-428 and Cys-547 are joined by a disulfide bond. Residue His-466 participates in tacrine binding. Residue His-466 is the Charge relay system of the active site. Asn-483 carries N-linked (GlcNAc...) (complex) asparagine glycosylation. Residues Asn-509, Asn-513, and Asn-514 are each glycosylated (N-linked (GlcNAc...) asparagine).

This sequence belongs to the type-B carboxylesterase/lipase family. In terms of assembly, homotetramer; disulfide-linked. Dimer of dimers. In terms of processing, N-glycosylated. No other PTM detected. The major N-glycan structures are of the complex diantennary type with 1 and 2 N-acetylneuraminic acid molecules (Neu5Ac) making up approximately 33% and 47% of the total N-glycans, respectively. Only low amounts of fucosylated diantennary N-glycans are detected (approximately 2%). Triantennary N-glycans with or without fucose amount to approximately 13%, whereas 5% of the total N-glycans are of the oligomannosidic or hybrid type. As to expression, detected in blood plasma (at protein level). Present in most cells except erythrocytes.

The protein localises to the secreted. The catalysed reaction is an acylcholine + H2O = a carboxylate + choline + H(+). With respect to regulation, inhibited by mercury. Inhibited by Tabun. Tabun forms a covalent adduct with Ser-226 that becomes irreversible upon aging. In terms of biological role, esterase with broad substrate specificity. Contributes to the inactivation of the neurotransmitter acetylcholine. Can degrade neurotoxic organophosphate esters. This is Cholinesterase (BCHE) from Homo sapiens (Human).